The sequence spans 420 residues: MAP kinase-interacting serine/threonine-protein kinase 1 (420 aa).

The interval 1 to 25 is disordered; that stretch reads MGSSEPIPIAESDKRKKKKRKARAT. Ser-27 carries the post-translational modification Phosphoserine; by PAK2. The Protein kinase domain maps to 37–321; it reads KLTSELLGEG…AAQVLQHPWV (285 aa). ATP contacts are provided by residues 43–51 and Lys-66; that span reads LGEGANAKV. Residue Asp-158 is the Proton acceptor of the active site. Ser-168 and Ser-173 each carry phosphoserine. Residues Thr-197, Thr-202, and Thr-332 each carry the phosphothreonine modification. The tract at residues 386–420 is disordered; that stretch reads LSPPSKSRLARRRALAQAGRSGDAPPSPTPTTPAP. Positions 400-409 are enriched in low complexity; that stretch reads LAQAGRSGDA. Positions 410-420 are enriched in pro residues; the sequence is PPSPTPTTPAP.

It belongs to the protein kinase superfamily. CAMK Ser/Thr protein kinase family. As to quaternary structure, interacts with the C-terminal regions of EIF4G1 and EIF4G2. Also binds to dephosphorylated ERK1 and ERK2, and to the p38 kinases. Requires Mg(2+) as cofactor. Dual phosphorylation of Thr-197 and Thr-202 activates the kinase. Phosphorylation of Thr-332 activates the kinase. MAPK3/ERK1 is one of the kinases which activate MKNK1/MNK1. Phosphorylation by PAK2 leads to a reduced phosphorylation of EIF4G1.

The catalysed reaction is L-seryl-[protein] + ATP = O-phospho-L-seryl-[protein] + ADP + H(+). It carries out the reaction L-threonyl-[protein] + ATP = O-phospho-L-threonyl-[protein] + ADP + H(+). Its activity is regulated as follows. Phosphorylated and activated by the p38 kinases and kinases in the Erk pathway. Its function is as follows. May play a role in the response to environmental stress and cytokines. Appears to regulate translation by phosphorylating EIF4E, thus increasing the affinity of this protein for the 7-methylguanosine-containing mRNA cap. This chain is MAP kinase-interacting serine/threonine-protein kinase 1 (MKNK1), found in Bos taurus (Bovine).